The sequence spans 101 residues: Small ribosomal subunit protein uS14 (101 aa).

Belongs to the universal ribosomal protein uS14 family. Part of the 30S ribosomal subunit. Contacts proteins S3 and S10.

Functionally, binds 16S rRNA, required for the assembly of 30S particles and may also be responsible for determining the conformation of the 16S rRNA at the A site. This chain is Small ribosomal subunit protein uS14, found in Salmonella paratyphi A (strain ATCC 9150 / SARB42).